Here is a 225-residue protein sequence, read N- to C-terminus: Urease accessory protein UreF (225 aa).

The protein belongs to the UreF family. As to quaternary structure, ureD, UreF and UreG form a complex that acts as a GTP-hydrolysis-dependent molecular chaperone, activating the urease apoprotein by helping to assemble the nickel containing metallocenter of UreC. The UreE protein probably delivers the nickel.

Its subcellular location is the cytoplasm. Its function is as follows. Required for maturation of urease via the functional incorporation of the urease nickel metallocenter. This is Urease accessory protein UreF from Arthrobacter sp. (strain FB24).